Consider the following 439-residue polypeptide: GTPase Der (439 aa).

2 consecutive EngA-type G domains span residues 3-167 (PLVA…PKSS) and 176-351 (TRIA…AQYS). GTP-binding positions include 9–16 (GRPNVGKS), 56–60 (DTGGF), 119–122 (NKVD), 182–189 (GRPNVGKS), 229–233 (DTAGI), and 294–297 (NKWD). The 85-residue stretch at 352–436 (KRVSTSDLNR…PLKIIFRGRD (85 aa)) folds into the KH-like domain.

The protein belongs to the TRAFAC class TrmE-Era-EngA-EngB-Septin-like GTPase superfamily. EngA (Der) GTPase family. As to quaternary structure, associates with the 50S ribosomal subunit.

In terms of biological role, GTPase that plays an essential role in the late steps of ribosome biogenesis. This is GTPase Der from Geobacter metallireducens (strain ATCC 53774 / DSM 7210 / GS-15).